The following is a 771-amino-acid chain: Topoisomerase 1-associated factor 2 (771 aa).

Disordered stretches follow at residues 48 to 69 (NSIN…SIQS), 271 to 330 (EGVV…ISFD), and 346 to 367 (SDMH…KSSL). The segment covering 51 to 69 (NNCSDPSPTSPSSQNSIQS) has biased composition (low complexity). A compositionally biased stretch (polar residues) spans 275 to 294 (TQGSDNNKENIPSSTQQQKN). Over residues 295–307 (DGAKRAESKDLDL) the composition is skewed to basic and acidic residues. Over residues 346–359 (SDMHIQYSNPSSGA) the composition is skewed to polar residues. Phosphoserine is present on Ser397. Thr405 is subject to Phosphothreonine. Residues 633-771 (NSKDKVEATS…KYVESDEDDQ (139 aa)) are disordered. The span at 640–652 (ATSNSTAQEQEQV) shows a compositional bias: polar residues. The segment covering 690–709 (SHSSPSSSSSMSLESSLDSS) has biased composition (low complexity).

The protein to yeast YJL076w. In terms of assembly, interacts with HPR1.

The protein resides in the nucleus. The chain is Topoisomerase 1-associated factor 2 (TOF2) from Saccharomyces cerevisiae (strain ATCC 204508 / S288c) (Baker's yeast).